Here is a 348-residue protein sequence, read N- to C-terminus: MTQKLVTKPFIEVLSGNRQASPPMWMMRQAGRYLPEYRATRAEAGSFLDLCFNAKLAAEVTLQPIRRFGFDAAIIFSDILVVPYALGRAVRFEVGEGPRLDPLNSPDLVGTLNGAIDLSKLEPVFEALRIVRSELAPETTLIGFCGAPFTVATYMVAGQGTSDQHPARLMAYQHPGAFARIIDVLVESSIQYLLKQLEAGADVLQIFDTWGGILPPREFEKWCIEPTRRIVEGVRKVSPGAKIIGFPRGAGAMLPDFIARTGVDAVSIDWTAEPNMIRERVQSKVAVQGNLDPLLLIAGGSALDQGVDDVLKNFSAGRHIFNLGHGITPDAPVAHVEQMVKRVRAYKG.

Residues 28–32 (RQAGR), Asp-78, Tyr-154, Thr-209, and His-325 contribute to the substrate site.

This sequence belongs to the uroporphyrinogen decarboxylase family. Homodimer.

It localises to the cytoplasm. It carries out the reaction uroporphyrinogen III + 4 H(+) = coproporphyrinogen III + 4 CO2. Its pathway is porphyrin-containing compound metabolism; protoporphyrin-IX biosynthesis; coproporphyrinogen-III from 5-aminolevulinate: step 4/4. Its function is as follows. Catalyzes the decarboxylation of four acetate groups of uroporphyrinogen-III to yield coproporphyrinogen-III. This Rhodopseudomonas palustris (strain HaA2) protein is Uroporphyrinogen decarboxylase.